The chain runs to 557 residues: TBCC domain-containing protein 1 (557 aa).

The C-CAP/cofactor C-like domain occupies 290–435 (TTKRAKIACN…LEDHMARTGL (146 aa)).

This sequence belongs to the TBCC family.

It is found in the cytoplasm. The protein localises to the cytoskeleton. Its subcellular location is the microtubule organizing center. The protein resides in the centrosome. It localises to the spindle pole. Plays a role in the regulation of centrosome and Golgi apparatus positioning, with consequences on cell shape and cell migration. This Homo sapiens (Human) protein is TBCC domain-containing protein 1 (TBCCD1).